A 286-amino-acid chain; its full sequence is ATP synthase gamma chain (286 aa).

The protein belongs to the ATPase gamma chain family. F-type ATPases have 2 components, CF(1) - the catalytic core - and CF(0) - the membrane proton channel. CF(1) has five subunits: alpha(3), beta(3), gamma(1), delta(1), epsilon(1). CF(0) has three main subunits: a, b and c.

The protein localises to the cell inner membrane. Functionally, produces ATP from ADP in the presence of a proton gradient across the membrane. The gamma chain is believed to be important in regulating ATPase activity and the flow of protons through the CF(0) complex. In Shewanella loihica (strain ATCC BAA-1088 / PV-4), this protein is ATP synthase gamma chain.